The primary structure comprises 185 residues: Photosystem I assembly protein Ycf4 (185 aa).

Helical transmembrane passes span Gly-20–Ala-40 and Ile-57–Ser-77.

It belongs to the Ycf4 family.

The protein resides in the plastid. Its subcellular location is the chloroplast thylakoid membrane. Functionally, seems to be required for the assembly of the photosystem I complex. This chain is Photosystem I assembly protein Ycf4, found in Agrostis stolonifera (Creeping bentgrass).